We begin with the raw amino-acid sequence, 203 residues long: NAD(P)H-quinone oxidoreductase subunit I (203 aa).

2 4Fe-4S ferredoxin-type domains span residues 55–84 (GRIH…VDWE) and 95–124 (KHYS…MTEE). Cysteine 64, cysteine 67, cysteine 70, cysteine 74, cysteine 104, cysteine 107, cysteine 110, and cysteine 114 together coordinate [4Fe-4S] cluster.

The protein belongs to the complex I 23 kDa subunit family. As to quaternary structure, NDH-1 is composed of at least 11 different subunits. It depends on [4Fe-4S] cluster as a cofactor.

The protein resides in the cellular thylakoid membrane. It carries out the reaction a plastoquinone + NADH + (n+1) H(+)(in) = a plastoquinol + NAD(+) + n H(+)(out). It catalyses the reaction a plastoquinone + NADPH + (n+1) H(+)(in) = a plastoquinol + NADP(+) + n H(+)(out). Functionally, NDH-1 shuttles electrons from an unknown electron donor, via FMN and iron-sulfur (Fe-S) centers, to quinones in the respiratory and/or the photosynthetic chain. The immediate electron acceptor for the enzyme in this species is believed to be plastoquinone. Couples the redox reaction to proton translocation, and thus conserves the redox energy in a proton gradient. The sequence is that of NAD(P)H-quinone oxidoreductase subunit I (ndhI) from Picosynechococcus sp. (strain ATCC 27264 / PCC 7002 / PR-6) (Agmenellum quadruplicatum).